Here is a 361-residue protein sequence, read N- to C-terminus: MSLPIAVYSLSVKGKDVPAVEESTDASIHLTMASIDAGEKSNKPTTLLVKVRPRIPVEDEDDEELDEQMQELLEESQREFVLCTLKPGSLYQQPLNLTITPGDEVFFSASGDATIHLSGNFLVDEEDEEEEESDEDYDLSPTEEDLVETVSGDEESEEESESEDNSASEEDELDSAPAKKAQVKKKRTKDESEQEEAASPKKNNTKKQKVEGTPVKEKKVAFAEKLEQGPTGPAAKKEKQQASSNAPSSPKTRTLKGGVVVTDVKTGSGASATNGKKVEMRYIGKLENGKVFDKNTKGKPFAFILGRGEVIRGWDVGVAGMQEGGERKITIPAPMAYGNQSIPGIPKNSTLVFEVKLVRVH.

Positions 122-256 are disordered; sequence LVDEEDEEEE…PSSPKTRTLK (135 aa). Residues 123–174 are compositionally biased toward acidic residues; that stretch reads VDEEDEEEEESDEDYDLSPTEEDLVETVSGDEESEEESESEDNSASEEDELD. A Phosphoserine modification is found at Ser192. Residues 208–227 are compositionally biased toward basic and acidic residues; sequence QKVEGTPVKEKKVAFAEKLE. Thr213 carries the phosphothreonine modification. Positions 241-252 are enriched in polar residues; the sequence is QASSNAPSSPKT. At Ser249 the chain carries Phosphoserine. The PPIase FKBP-type domain maps to 275–361; that stretch reads GKKVEMRYIG…VFEVKLVRVH (87 aa).

Belongs to the FKBP-type PPIase family. FKBP3/4 subfamily.

The protein localises to the nucleus. It localises to the nucleolus. It carries out the reaction [protein]-peptidylproline (omega=180) = [protein]-peptidylproline (omega=0). Functionally, PPIase that acts as a histone chaperone. Histone proline isomerase that increases the rate of cis-trans isomerization at prolines on the histone H3 N-terminal tail. Proline isomerization influences H3 methylation thereby regulating gene expression. This chain is FK506-binding protein 39 kDa, found in Schizosaccharomyces pombe (strain 972 / ATCC 24843) (Fission yeast).